The primary structure comprises 101 residues: MMFEHVLFLSAYLFSIGIYGLITSRSMVRALMCLELILNSVNINLVTFSDLFDSRQLKGDIFSIFVIAIAAAEAAIGLAIVSSIYRNRKSIRINQSNLLNK.

The next 3 membrane-spanning stretches (helical) occupy residues 2-22 (MFEH…YGLI), 32-52 (MCLE…SDLF), and 61-81 (IFSI…LAIV).

This sequence belongs to the complex I subunit 4L family. As to quaternary structure, NDH is composed of at least 16 different subunits, 5 of which are encoded in the nucleus.

It localises to the plastid. The protein resides in the chloroplast thylakoid membrane. It carries out the reaction a plastoquinone + NADH + (n+1) H(+)(in) = a plastoquinol + NAD(+) + n H(+)(out). The enzyme catalyses a plastoquinone + NADPH + (n+1) H(+)(in) = a plastoquinol + NADP(+) + n H(+)(out). Its function is as follows. NDH shuttles electrons from NAD(P)H:plastoquinone, via FMN and iron-sulfur (Fe-S) centers, to quinones in the photosynthetic chain and possibly in a chloroplast respiratory chain. The immediate electron acceptor for the enzyme in this species is believed to be plastoquinone. Couples the redox reaction to proton translocation, and thus conserves the redox energy in a proton gradient. This Lemna minor (Common duckweed) protein is NAD(P)H-quinone oxidoreductase subunit 4L, chloroplastic.